A 172-amino-acid polypeptide reads, in one-letter code: Mitochondrial import inner membrane translocase subunit Tim17-B (172 aa).

Cysteine 9 and cysteine 78 are disulfide-bonded. Helical transmembrane passes span 17 to 37 (CGGAFTMGVIGGGVFQAIKGF), 61 to 77 (QIGGSFAVWGGLFSTID), and 113 to 133 (VGSAMMGGILLALIEGVGILL). The tract at residues 147 to 172 (FLEDPSQLTPKEGSPAPGYPNYQQYH) is disordered.

Belongs to the Tim17/Tim22/Tim23 family. As to quaternary structure, component of the TIM23 complex at least composed of TIMM23, TIMM17 (TIMM17A or TIMM17B) and TIMM50. The complex interacts with the TIMM44 component of the PAM complex. The complex also interacts with DNAJC15.

Its subcellular location is the mitochondrion inner membrane. Its function is as follows. Essential component of the TIM23 complex, a complex that mediates the translocation of transit peptide-containing proteins across the mitochondrial inner membrane. The chain is Mitochondrial import inner membrane translocase subunit Tim17-B (Timm17b) from Mus musculus (Mouse).